The chain runs to 136 residues: Large ribosomal subunit protein uL16 (136 aa).

It belongs to the universal ribosomal protein uL16 family. Part of the 50S ribosomal subunit.

Binds 23S rRNA and is also seen to make contacts with the A and possibly P site tRNAs. The polypeptide is Large ribosomal subunit protein uL16 (Vibrio atlanticus (strain LGP32) (Vibrio splendidus (strain Mel32))).